The following is a 167-amino-acid chain: SsrA-binding protein (167 aa).

The disordered stretch occupies residues 137–167; that stretch reads GKQSHDKRDAAKERDWQRDKQRVMRRHNRDA. Basic and acidic residues predominate over residues 139-158; the sequence is QSHDKRDAAKERDWQRDKQR.

This sequence belongs to the SmpB family.

It is found in the cytoplasm. Functionally, required for rescue of stalled ribosomes mediated by trans-translation. Binds to transfer-messenger RNA (tmRNA), required for stable association of tmRNA with ribosomes. tmRNA and SmpB together mimic tRNA shape, replacing the anticodon stem-loop with SmpB. tmRNA is encoded by the ssrA gene; the 2 termini fold to resemble tRNA(Ala) and it encodes a 'tag peptide', a short internal open reading frame. During trans-translation Ala-aminoacylated tmRNA acts like a tRNA, entering the A-site of stalled ribosomes, displacing the stalled mRNA. The ribosome then switches to translate the ORF on the tmRNA; the nascent peptide is terminated with the 'tag peptide' encoded by the tmRNA and targeted for degradation. The ribosome is freed to recommence translation, which seems to be the essential function of trans-translation. The protein is SsrA-binding protein of Xanthomonas campestris pv. campestris (strain 8004).